Here is a 275-residue protein sequence, read N- to C-terminus: Formamidopyrimidine-DNA glycosylase (275 aa).

The active-site Schiff-base intermediate with DNA is the P2. E3 (proton donor) is an active-site residue. K58 acts as the Proton donor; for beta-elimination activity in catalysis. DNA is bound by residues H91, R109, and R154. Residues 240–274 form an FPG-type zinc finger; sequence AVYERAGLPCRVCGAPIRRLVQGQRATYFCPSCQK. R264 functions as the Proton donor; for delta-elimination activity in the catalytic mechanism.

It belongs to the FPG family. Monomer. Requires Zn(2+) as cofactor.

The catalysed reaction is Hydrolysis of DNA containing ring-opened 7-methylguanine residues, releasing 2,6-diamino-4-hydroxy-5-(N-methyl)formamidopyrimidine.. The enzyme catalyses 2'-deoxyribonucleotide-(2'-deoxyribose 5'-phosphate)-2'-deoxyribonucleotide-DNA = a 3'-end 2'-deoxyribonucleotide-(2,3-dehydro-2,3-deoxyribose 5'-phosphate)-DNA + a 5'-end 5'-phospho-2'-deoxyribonucleoside-DNA + H(+). In terms of biological role, involved in base excision repair of DNA damaged by oxidation or by mutagenic agents. Acts as a DNA glycosylase that recognizes and removes damaged bases. Has a preference for oxidized purines, such as 7,8-dihydro-8-oxoguanine (8-oxoG). Has AP (apurinic/apyrimidinic) lyase activity and introduces nicks in the DNA strand. Cleaves the DNA backbone by beta-delta elimination to generate a single-strand break at the site of the removed base with both 3'- and 5'-phosphates. In Bordetella parapertussis (strain 12822 / ATCC BAA-587 / NCTC 13253), this protein is Formamidopyrimidine-DNA glycosylase.